We begin with the raw amino-acid sequence, 689 residues long: Glycine--tRNA ligase beta subunit (689 aa).

The protein belongs to the class-II aminoacyl-tRNA synthetase family. Tetramer of two alpha and two beta subunits.

Its subcellular location is the cytoplasm. The catalysed reaction is tRNA(Gly) + glycine + ATP = glycyl-tRNA(Gly) + AMP + diphosphate. This is Glycine--tRNA ligase beta subunit from Glaesserella parasuis serovar 5 (strain SH0165) (Haemophilus parasuis).